A 434-amino-acid polypeptide reads, in one-letter code: Nicotinate phosphoribosyltransferase (434 aa).

Histidine 242 carries the post-translational modification Phosphohistidine; by autocatalysis.

Belongs to the NAPRTase family. In terms of processing, transiently phosphorylated on a His residue during the reaction cycle. Phosphorylation strongly increases the affinity for substrates and increases the rate of nicotinate D-ribonucleotide production. Dephosphorylation regenerates the low-affinity form of the enzyme, leading to product release.

It carries out the reaction nicotinate + 5-phospho-alpha-D-ribose 1-diphosphate + ATP + H2O = nicotinate beta-D-ribonucleotide + ADP + phosphate + diphosphate. The protein operates within cofactor biosynthesis; NAD(+) biosynthesis; nicotinate D-ribonucleotide from nicotinate: step 1/1. In terms of biological role, catalyzes the synthesis of beta-nicotinate D-ribonucleotide from nicotinate and 5-phospho-D-ribose 1-phosphate at the expense of ATP. The polypeptide is Nicotinate phosphoribosyltransferase (Bartonella tribocorum (strain CIP 105476 / IBS 506)).